The chain runs to 1290 residues: Period circadian protein homolog 1 (1290 aa).

The disordered stretch occupies residues 1–134 (MSGPLEGADG…SSEQSARART (134 aa)). Positions 1–151 (MSGPLEGADG…LRELKLRLPP (151 aa)) are interaction with BTRC. Over residues 25 to 38 (VPSPGPPQHRPCPG) the composition is skewed to pro residues. 2 stretches are compositionally biased toward low complexity: residues 48-57 (NSNGSSGNES) and 64-115 (GASQ…ASSE). The segment covering 116-132 (QDNPSTSGCSSEQSARA) has biased composition (polar residues). The residue at position 121 (Thr121) is a Phosphothreonine; by CSNK1E. Residues Ser122 and Ser126 each carry the phosphoserine; by CSNK1E modification. A Nuclear export signal 1 motif is present at residues 138–147 (LMTALRELKL). 2 consecutive PAS domains span residues 208-275 (ITSE…PSRL) and 348-414 (YEAP…KILQ). The PAC domain occupies 422–465 (HSPIRFCARNGEYVTMDTSWAGFVHPWSRKVAFVLGRHKVRTAP). The short motif at 489 to 498 (LSEQIHRLLL) is the Nuclear export signal 2 element. Disordered regions lie at residues 508-544 (GLCG…PAPV) and 646-698 (TTKR…KEPV). 2 stretches are compositionally biased toward low complexity: residues 517-533 (SPGP…SNGG) and 652-662 (ASSSSYTTSSA). A required for phosphorylation by CSNK1E region spans residues 596–815 (ELEAGSAPVQ…GLDSSSTAPS (220 aa)). Residues Ser661, Ser663, and Ser704 each carry the phosphoserine modification. Disordered regions lie at residues 749–772 (GLAP…APDA), 805–874 (RGLD…PPAT), and 938–977 (ALQT…FNSR). Over residues 751 to 769 (APGPAPSPAPSPTVAPDPA) the composition is skewed to pro residues. Ser815 carries the post-translational modification Phosphoserine. A Nuclear localization signal motif is present at residues 827–843 (APPSRRHHCRSKAKRSR). Positions 830–847 (SRRHHCRSKAKRSRHHQN) are enriched in basic residues. The span at 860 to 874 (SPVPPSTPWPTPPAT) shows a compositional bias: pro residues. The segment covering 950–961 (ASHSPSPSLPAL) has biased composition (low complexity). A phosphoserine mark is found at Ser979 and Ser980. The Nuclear export signal 3 motif lies at 982–989 (LQLNLLQL). The interval 996 to 1037 (EGAAVAGGPGSSAGPPPPSAEAAEPEARLAEVTESSNQDALS) is disordered. An LXXLL motif is present at residues 1043–1047 (LELLL). The segment covering 1051 to 1062 (SRSGTGSAASGS) has biased composition (low complexity). Disordered stretches follow at residues 1051–1098 (SRSG…SKYF) and 1207–1290 (SSTQ…NCTS). Residues 1063–1077 (LGSGLGSGSGSGSHE) are compositionally biased toward gly residues. Positions 1078-1095 (GGSTSASITRSSQSSHTS) are enriched in low complexity. Positions 1149 to 1290 (SRDMTSVLKQ…ALPTAGNCTS (142 aa)) are CRY binding domain. Gly residues predominate over residues 1236 to 1248 (GEQGSSGGGSGEG).

In terms of assembly, homodimer. Component of the circadian core oscillator, which includes the CRY proteins, CLOCK or NPAS2, BMAL1 or BMAL2, CSNK1D and/or CSNK1E, TIMELESS, and the PER proteins. Interacts directly with TIMELESS, PER2, PER3, CRY1 and CRY2. Interacts with BMAL1 and CLOCK. Interacts with GPRASP1. Interacts (phosphorylated) with BTRC and FBXW11; the interactions trigger proteasomal degradation. Interacts with NONO, WDR5 and SFPQ. Interacts with USP2. Interacts with HNF4A. Post-translationally, phosphorylated on serine residues by CSNK1D, CSNK1E and probably also by CSNK1G2. Phosphorylation by CSNK1D or CSNK1E promotes nuclear location of PER proteins as well as ubiquitination and subsequent degradation. May be dephosphorylated by PP1. Ubiquitinated; requires phosphorylation by CSNK1E and interaction with BTRC and FBXW11. Deubiquitinated by USP2. Widely expressed. Expressed in hair follicles (at protein level). Found in heart, brain, placenta, lung, liver, skeletal muscle, pancreas, kidney, spleen, thymus, prostate, testis, ovary and small intestine. Highest level in skeletal muscle.

The protein localises to the nucleus. It localises to the cytoplasm. In terms of biological role, transcriptional repressor which forms a core component of the circadian clock. The circadian clock, an internal time-keeping system, regulates various physiological processes through the generation of approximately 24 hour circadian rhythms in gene expression, which are translated into rhythms in metabolism and behavior. It is derived from the Latin roots 'circa' (about) and 'diem' (day) and acts as an important regulator of a wide array of physiological functions including metabolism, sleep, body temperature, blood pressure, endocrine, immune, cardiovascular, and renal function. Consists of two major components: the central clock, residing in the suprachiasmatic nucleus (SCN) of the brain, and the peripheral clocks that are present in nearly every tissue and organ system. Both the central and peripheral clocks can be reset by environmental cues, also known as Zeitgebers (German for 'timegivers'). The predominant Zeitgeber for the central clock is light, which is sensed by retina and signals directly to the SCN. The central clock entrains the peripheral clocks through neuronal and hormonal signals, body temperature and feeding-related cues, aligning all clocks with the external light/dark cycle. Circadian rhythms allow an organism to achieve temporal homeostasis with its environment at the molecular level by regulating gene expression to create a peak of protein expression once every 24 hours to control when a particular physiological process is most active with respect to the solar day. Transcription and translation of core clock components (CLOCK, NPAS2, BMAL1, BMAL2, PER1, PER2, PER3, CRY1 and CRY2) plays a critical role in rhythm generation, whereas delays imposed by post-translational modifications (PTMs) are important for determining the period (tau) of the rhythms (tau refers to the period of a rhythm and is the length, in time, of one complete cycle). A diurnal rhythm is synchronized with the day/night cycle, while the ultradian and infradian rhythms have a period shorter and longer than 24 hours, respectively. Disruptions in the circadian rhythms contribute to the pathology of cardiovascular diseases, cancer, metabolic syndromes and aging. A transcription/translation feedback loop (TTFL) forms the core of the molecular circadian clock mechanism. Transcription factors, CLOCK or NPAS2 and BMAL1 or BMAL2, form the positive limb of the feedback loop, act in the form of a heterodimer and activate the transcription of core clock genes and clock-controlled genes (involved in key metabolic processes), harboring E-box elements (5'-CACGTG-3') within their promoters. The core clock genes: PER1/2/3 and CRY1/2 which are transcriptional repressors form the negative limb of the feedback loop and interact with the CLOCK|NPAS2-BMAL1|BMAL2 heterodimer inhibiting its activity and thereby negatively regulating their own expression. This heterodimer also activates nuclear receptors NR1D1/2 and RORA/B/G, which form a second feedback loop and which activate and repress BMAL1 transcription, respectively. Regulates circadian target genes expression at post-transcriptional levels, but may not be required for the repression at transcriptional level. Controls PER2 protein decay. Represses CRY2 preventing its repression on CLOCK/BMAL1 target genes such as FXYD5 and SCNN1A in kidney and PPARA in liver. Besides its involvement in the maintenance of the circadian clock, has an important function in the regulation of several processes. Participates in the repression of glucocorticoid receptor NR3C1/GR-induced transcriptional activity by reducing the association of NR3C1/GR to glucocorticoid response elements (GREs) by BMAL1:CLOCK. Plays a role in the modulation of the neuroinflammatory state via the regulation of inflammatory mediators release, such as CCL2 and IL6. In spinal astrocytes, negatively regulates the MAPK14/p38 and MAPK8/JNK MAPK cascades as well as the subsequent activation of NFkappaB. Coordinately regulates the expression of multiple genes that are involved in the regulation of renal sodium reabsorption. Can act as gene expression activator in a gene and tissue specific manner, in kidney enhances WNK1 and SLC12A3 expression in collaboration with CLOCK. Modulates hair follicle cycling. Represses the CLOCK-BMAL1 induced transcription of BHLHE40/DEC1. The protein is Period circadian protein homolog 1 (PER1) of Homo sapiens (Human).